Here is a 530-residue protein sequence, read N- to C-terminus: Autoinducer-2 kinase (530 aa).

It belongs to the FGGY kinase family.

The protein localises to the cytoplasm. It carries out the reaction (S)-4,5-dihydroxypentane-2,3-dione + ATP = (2S)-2-hydroxy-3,4-dioxopentyl phosphate + ADP + H(+). Its function is as follows. Catalyzes the phosphorylation of autoinducer-2 (AI-2) to phospho-AI-2, which subsequently inactivates the transcriptional regulator LsrR and leads to the transcription of the lsr operon. Phosphorylates the ring-open form of (S)-4,5-dihydroxypentane-2,3-dione (DPD), which is the precursor to all AI-2 signaling molecules, at the C5 position. The sequence is that of Autoinducer-2 kinase from Escherichia coli O9:H4 (strain HS).